The primary structure comprises 125 residues: uncharacterized protein (125 aa).

2 helical membrane passes run 22-44 and 54-73; these read TPLM…NAAV and YMGI…SVLM.

The protein belongs to the bacteriophage holin family. Cp-1 holin subfamily.

The protein resides in the cell membrane. This is an uncharacterized protein from Clostridium acetobutylicum (strain ATCC 824 / DSM 792 / JCM 1419 / IAM 19013 / LMG 5710 / NBRC 13948 / NRRL B-527 / VKM B-1787 / 2291 / W).